The primary structure comprises 149 residues: Cytochrome c-555 (149 aa).

Residues methionine 1–alanine 20 form the signal peptide. Heme c-binding residues include methionine 32, cysteine 137, cysteine 140, and histidine 141.

Monomer. In terms of processing, binds 1 heme c group covalently per subunit.

The protein localises to the periplasm. In terms of biological role, low-spin monoheme cytochrome. In Bradyrhizobium diazoefficiens (strain JCM 10833 / BCRC 13528 / IAM 13628 / NBRC 14792 / USDA 110), this protein is Cytochrome c-555 (cycC).